A 259-amino-acid polypeptide reads, in one-letter code: MAFKIWQIGLHLQQQEAVAVAIVRGAKECFLQRWWRLPLENDIIKDGRIVDAQQLAKTLLPWSRELPQRHHIMLAFPASRTLQRSFPRPSMSLGEREQTAWLSGTMARELDMDPDSLRFDYSEDSLSPAYNVTAAQSKELATLLTLAERLRVHVSAITPDASALQRFLPFLPSHQQCLAWRDNEQWLWATRYSWGRKLAVGMTSAKELAAALSVDPESVAICGEGGFDPWEAVSVRQPPLPPPGGDFAIALGLALGKAY.

In terms of biological role, required for the use of extracellular DNA as a nutrient. In Escherichia coli (strain K12), this protein is DNA utilization protein HofM (hofM).